Here is a 515-residue protein sequence, read N- to C-terminus: 2,3-bisphosphoglycerate-independent phosphoglycerate mutase (515 aa).

Mn(2+) is bound by residues D14 and S64. S64 serves as the catalytic Phosphoserine intermediate. Substrate is bound by residues H125, 155-156, R187, R193, 263-266, and K337; these read RD and RADR. Mn(2+) contacts are provided by D404, H408, D445, H446, and H464.

The protein belongs to the BPG-independent phosphoglycerate mutase family. As to quaternary structure, monomer. The cofactor is Mn(2+).

The catalysed reaction is (2R)-2-phosphoglycerate = (2R)-3-phosphoglycerate. The protein operates within carbohydrate degradation; glycolysis; pyruvate from D-glyceraldehyde 3-phosphate: step 3/5. Its function is as follows. Catalyzes the interconversion of 2-phosphoglycerate and 3-phosphoglycerate. This is 2,3-bisphosphoglycerate-independent phosphoglycerate mutase from Yersinia pestis bv. Antiqua (strain Antiqua).